A 235-amino-acid polypeptide reads, in one-letter code: Thaumatin II (235 aa).

Positions 1–22 are cleaved as a signal peptide; the sequence is MAATTCFFFLFPFLLLLTLSRA. 8 disulfides stabilise this stretch: Cys31-Cys226, Cys78-Cys88, Cys93-Cys99, Cys143-Cys215, Cys148-Cys199, Cys156-Cys167, Cys171-Cys180, and Cys181-Cys186. A propeptide spans 230-235 (removed in mature form); it reads LELEDE.

This sequence belongs to the thaumatin family.

It is found in the cytoplasmic vesicle. Taste-modifying protein; intensely sweet-tasting. It is 100000 times sweeter than sucrose on a molar basis. This is Thaumatin II from Thaumatococcus daniellii (Katemfe).